Reading from the N-terminus, the 379-residue chain is Cytochrome b (379 aa).

A run of 4 helical transmembrane segments spans residues 34 to 54 (FGSL…LLAM), 78 to 99 (WFIR…YLHI), 114 to 134 (WNTG…GYVL), and 179 to 199 (FFAL…VHLT). Positions 84 and 98 each coordinate heme b. Heme b-binding residues include His-183 and His-197. His-202 contributes to the a ubiquinone binding site. The next 4 helical transmembrane spans lie at 227 to 247 (LKDI…AFFS), 289 to 309 (LGGV…PLLH), 321 to 341 (LSQL…WIGS), and 348 to 368 (FIII…VLFP).

This sequence belongs to the cytochrome b family. As to quaternary structure, the cytochrome bc1 complex contains 11 subunits: 3 respiratory subunits (MT-CYB, CYC1 and UQCRFS1), 2 core proteins (UQCRC1 and UQCRC2) and 6 low-molecular weight proteins (UQCRH/QCR6, UQCRB/QCR7, UQCRQ/QCR8, UQCR10/QCR9, UQCR11/QCR10 and a cleavage product of UQCRFS1). This cytochrome bc1 complex then forms a dimer. Heme b serves as cofactor.

The protein resides in the mitochondrion inner membrane. Component of the ubiquinol-cytochrome c reductase complex (complex III or cytochrome b-c1 complex) that is part of the mitochondrial respiratory chain. The b-c1 complex mediates electron transfer from ubiquinol to cytochrome c. Contributes to the generation of a proton gradient across the mitochondrial membrane that is then used for ATP synthesis. In Struthio camelus (Common ostrich), this protein is Cytochrome b (MT-CYB).